The primary structure comprises 296 residues: 4-diphosphocytidyl-2-C-methyl-D-erythritol kinase (296 aa).

The active site involves Lys-18. Position 102–112 (102–112 (PMGGGIGGGSS)) interacts with ATP. Asp-144 is a catalytic residue.

This sequence belongs to the GHMP kinase family. IspE subfamily.

It carries out the reaction 4-CDP-2-C-methyl-D-erythritol + ATP = 4-CDP-2-C-methyl-D-erythritol 2-phosphate + ADP + H(+). Its pathway is isoprenoid biosynthesis; isopentenyl diphosphate biosynthesis via DXP pathway; isopentenyl diphosphate from 1-deoxy-D-xylulose 5-phosphate: step 3/6. Functionally, catalyzes the phosphorylation of the position 2 hydroxy group of 4-diphosphocytidyl-2C-methyl-D-erythritol. This is 4-diphosphocytidyl-2-C-methyl-D-erythritol kinase from Vibrio atlanticus (strain LGP32) (Vibrio splendidus (strain Mel32)).